The following is a 708-amino-acid chain: ARF GTPase-activating protein GIT2 (708 aa).

The Arf-GAP domain maps to 1–124; the sequence is MSKRLRSSDV…AFVHRLPCRE (124 aa). The segment at 11 to 34 adopts a C4-type zinc-finger fold; the sequence is CADCNGPDPSWASVNRGTFICDEC. 3 ANK repeats span residues 132 to 161, 166 to 195, and 199 to 228; these read DLSKQLHSSVRTGNLETCLRLLSLGAQANF, KGSTPLHVASKAGQILQAELLAVYGADPGT, and SGKTPVDYARQGGHHELAERLIEIQYELTD. Residues 376 to 592 form a disordered region; sequence STQHSTESQD…SPTLPSTEDV (217 aa). A compositionally biased stretch (acidic residues) spans 384–401; sequence QDNDQPDYDSVASDEDTD. A phosphoserine mark is found at S393 and S396. At T400 the chain carries Phosphothreonine. Positions 407–438 are enriched in polar residues; the sequence is SKANRQKLQTLQSENSSLRRQATASACQVQTG. The segment covering 504 to 518 has biased composition (low complexity); the sequence is TSSSSLPSFPSTLSW. Phosphoserine occurs at positions 508, 511, and 519. The span at 519–532 shows a compositional bias: basic and acidic residues; the sequence is SRDESARRASRLEK. T536 bears the Phosphothreonine mark. S563 carries the phosphoserine modification.

May form heterooligomers with GIT1. Directly interacts with protein Piccolo/PCLO. Interacts with PPFIA1 and PPFIA2. Interacts with ARHGEF7. Identified in a complex with ARHGEF6 and BIN2. Interacts with PAK3. Interacts with PXN/paxillin. Interacts with TGFB1I1. Forms a complex with EFNB1 and GRB4/NCK2. In terms of processing, tyrosine phosphorylated when coexpressed in cells with PTK2/FAK1 and SRC. Expressed in the brain (at protein level).

Functionally, GTPase-activating protein for ADP ribosylation factor family members, including ARF1. This chain is ARF GTPase-activating protein GIT2 (Git2), found in Mus musculus (Mouse).